The primary structure comprises 92 residues: Acylphosphatase (92 aa).

An intrachain disulfide couples Cys-5 to Cys-49. The 88-residue stretch at 5–92 folds into the Acylphosphatase-like domain; the sequence is CIIAWIYGRV…SGELTDFRIR (88 aa). Catalysis depends on residues Arg-20 and Asn-38.

This sequence belongs to the acylphosphatase family.

The enzyme catalyses an acyl phosphate + H2O = a carboxylate + phosphate + H(+). The polypeptide is Acylphosphatase (Escherichia coli O1:K1 / APEC).